The following is a 492-amino-acid chain: Dipeptide and tripeptide permease A (492 aa).

Residues 1–20 (MSTANKHPEAASLNAFKQPR) are Cytoplasmic-facing. A helical membrane pass occupies residues 21–43 (SFYLIFSIELWERFGYYGLQGIM). Topologically, residues 44 to 58 (AVYLVKMLGMSEAQS) are periplasmic. Residues 59 to 79 (ITLFASFSALVYGLIAVGGWL) traverse the membrane as a helical segment. Residues 80–88 (GDKVLGTKR) are Cytoplasmic-facing. Residues 89-109 (VIVLGTLVLALGYALVAWSGH) form a helical membrane-spanning segment. Position 110 (D110) is a topological domain, periplasmic. The chain crosses the membrane as a helical span at residues 111 to 131 (IAMIYFGMATIAVGNGLFKAN). Over 132-152 (PSSLLSTCYEKDDPRLDGAFT) the chain is Cytoplasmic. A helical membrane pass occupies residues 153–173 (MYYMAINIGSFFSMLATPWLA). At 174 to 178 (AQFGW) the chain is on the periplasmic side. A helical transmembrane segment spans residues 179 to 199 (STAFGLSFVGMLITLVNFMFF). Topologically, residues 200–217 (RKWVKDHGSKPDFAPLNM) are cytoplasmic. Residues 218 to 238 (GKLLVTLLGIAVMIAAATWLL) traverse the membrane as a helical segment. Residues 239–245 (HNQDIAR) lie on the Periplasmic side of the membrane. The chain crosses the membrane as a helical span at residues 246–266 (MVLGAVAVAIVVIFTKEALTL). Topologically, residues 267-273 (KGAARRK) are cytoplasmic. A helical membrane pass occupies residues 274–294 (MIVAFLLMLEAIVFFVLYMQM). Residues 295 to 319 (PTSLNFFAIRNVEHSLLGIAFQPEQ) are Periplasmic-facing. A helical transmembrane segment spans residues 320 to 340 (FQALNPFWIMIFSPLLAALYN). At 341 to 351 (KLGDRMPMPHK) the chain is on the cytoplasmic side. Residues 352–372 (FALGMVLCSAAFLVLPLGASL) traverse the membrane as a helical segment. At 373–377 (ANKMG) the chain is on the periplasmic side. A helical membrane pass occupies residues 378–398 (IVSVGWLVLSYALQSVGELMI). Residues 399 to 413 (SGLGLAMVAQLVPQR) are Cytoplasmic-facing. Residues 414-434 (LMGFIMGSWFLTTAGAAMVAG) traverse the membrane as a helical segment. Residues 435-458 (KVANLMAVPENITNPLLSLHVYGD) are Periplasmic-facing. The chain crosses the membrane as a helical span at residues 459 to 479 (IFFKIGITTGVIAVLMILAAP). At 480–492 (LLNRMTQDEQPGV) the chain is on the cytoplasmic side.

Belongs to the major facilitator superfamily. Proton-dependent oligopeptide transporter (POT/PTR) (TC 2.A.17) family. DtpA subfamily.

The protein resides in the cell inner membrane. In terms of biological role, proton-dependent permease that transports di- and tripeptides. This is Dipeptide and tripeptide permease A from Erwinia pyrifoliae (strain DSM 12163 / CIP 106111 / Ep16/96).